Here is a 314-residue protein sequence, read N- to C-terminus: Protein REGULATOR OF FATTY ACID COMPOSITION 3, chloroplastic (314 aa).

The transit peptide at 1–47 (MESLLHASSSLVSLRPRIDGRDSFINPSRVCLNPSLGRRGSKPLPLV) directs the protein to the chloroplast. Disordered stretches follow at residues 49–73 (AAKK…ATGP) and 214–314 (AITE…NVGG). The span at 56 to 69 (KKDDNHNFSARPDE) shows a compositional bias: basic and acidic residues. Acidic residues-rich tracts occupy residues 233–269 (EYYD…DDDG) and 277–294 (GDEE…EQEE). The span at 295-308 (GQDKSTNGRRETRR) shows a compositional bias: basic and acidic residues.

The protein belongs to the bacterial ribosomal protein bS6 family. In terms of assembly, interacts with CFM3B/SPRT2 in plastids. As to expression, expressed ubiquitously in roots, leaves, stems, flower buds, flowers and siliques.

Its subcellular location is the plastid. It localises to the chloroplast. Prevents non-specific action of the splicing factor CFM3b during plastid rRNA biogenesis to improve the accuracy of plastid rRNA processing. Required for plastid functions such as photosynthesis, intracellular distribution, plastid rRNAs biosynthesis and plastid gene expression in roots. Involved in a sucrose-conditional process important for the organization of root lateral and apical meristems (e.g. establishment of RAM from pericycle and symplasmic connectivity), and subsequent primary and lateral roots development. Modulates C18 unsaturated fatty acid metabolism. This is Protein REGULATOR OF FATTY ACID COMPOSITION 3, chloroplastic from Arabidopsis thaliana (Mouse-ear cress).